The following is a 229-amino-acid chain: Flagellar L-ring protein (229 aa).

The first 23 residues, 1–23 (MLSRLGARVLYCLAGLALLASGG), serve as a signal peptide directing secretion. The N-palmitoyl cysteine moiety is linked to residue Cys-24. Residue Cys-24 is the site of S-diacylglycerol cysteine attachment.

It belongs to the FlgH family. In terms of assembly, the basal body constitutes a major portion of the flagellar organelle and consists of four rings (L,P,S, and M) mounted on a central rod.

It is found in the cell outer membrane. It localises to the bacterial flagellum basal body. In terms of biological role, assembles around the rod to form the L-ring and probably protects the motor/basal body from shearing forces during rotation. The protein is Flagellar L-ring protein of Cupriavidus pinatubonensis (strain JMP 134 / LMG 1197) (Cupriavidus necator (strain JMP 134)).